The sequence spans 26 residues: Coenzyme PQQ synthesis protein A (26 aa).

Positions 16–20 form a cross-link, pyrroloquinoline quinone (Glu-Tyr); it reads EINMY.

Belongs to the PqqA family.

The protein operates within cofactor biosynthesis; pyrroloquinoline quinone biosynthesis. Functionally, required for coenzyme pyrroloquinoline quinone (PQQ) biosynthesis. PQQ is probably formed by cross-linking a specific glutamate to a specific tyrosine residue and excising these residues from the peptide. The sequence is that of Coenzyme PQQ synthesis protein A from Cereibacter sphaeroides (strain ATCC 17029 / ATH 2.4.9) (Rhodobacter sphaeroides).